The sequence spans 1052 residues: 3-hydroxy-3-methylglutaryl coenzyme A reductase mokG (1052 aa).

6 helical membrane-spanning segments follow: residues 223-243, 253-273, 279-299, 349-369, 378-398, and 440-460; these read VDMAIIGLGYLALNMTLVSLF, FWLAASVLLSGAFAFVFGLGV, VPVDMLLLSEGIPFLVLTVGF, GWSIVQSYLLEIGALALGAVF, FCFLAAWMVLFDAILLFTFYA, and WKLIMVGGFVLFNVLQLSSFF. One can recognise an SSD domain in the interval 224 to 403; it reads DMAIIGLGYL…FTFYATILCV (180 aa). Residues 461–617 are linker; sequence YRIMGGFMTN…FKANQAESLT (157 aa). The segment at 571 to 594 is disordered; it reads APKESAAPAPPSSPASVPSAVPVP. Residues 584–594 are compositionally biased toward low complexity; the sequence is PASVPSAVPVP. Residues 618 to 1044 form a catalytic region; it reads DDELAELCLR…LVNAHMRHNR (427 aa). Catalysis depends on E734, which acts as the Charge relay system. Residue N798 is glycosylated (N-linked (GlcNAc...) asparagine). Catalysis depends on charge relay system residues K867 and D943. H1039 serves as the catalytic Proton donor. N1043 is a glycosylation site (N-linked (GlcNAc...) asparagine).

The protein belongs to the HMG-CoA reductase family.

The protein localises to the endoplasmic reticulum membrane. It catalyses the reaction (R)-mevalonate + 2 NADP(+) + CoA = (3S)-3-hydroxy-3-methylglutaryl-CoA + 2 NADPH + 2 H(+). It functions in the pathway polyketide biosynthesis; lovastatin biosynthesis. Its function is as follows. HMG-CoA reductase; part of the gene cluster that mediates the biosynthesis of monakolin K, also known as lovastatin, and which acts as a potent competitive inhibitor of HMG-CoA reductase. Monakolin K biosynthesis is performed in two stages. The first stage is catalyzed by the nonaketide synthase mokA, which belongs to type I polyketide synthases and catalyzes the iterative nine-step formation of the polyketide. This PKS stage is completed by the action of dehydrogenase mokE, which catalyzes the NADPH-dependent reduction of the unsaturated tetra-, penta- and heptaketide intermediates that arise during the mokA-mediated biosynthesis of the nonaketide chain and leads to dihydromonacolin L. Covalently bound dihydromonacolin L is released from mokA by the mokD esterase. Conversion of dihydromonacolin L into monacolin L and then monacolin J is subsequently performed with the participation of molecular oxygen and P450 monoogygenase mokC. Finally, mokF performs the conversion of monacoline J to monacoline K through the addition of the side-chain diketide moiety (2R)-2-methylbutanoate produced by the diketide synthase mokB. HMG-CoA reductase mokG may act as a down-regulator of monacolin K production. This Monascus pilosus (Red mold) protein is 3-hydroxy-3-methylglutaryl coenzyme A reductase mokG.